We begin with the raw amino-acid sequence, 264 residues long: MYPHVGVDASGLATLRATVKSAQDLLRGFVPTAYAVPALAAAAVPAGPCYALAEGSAVVGRRARSSSSGAAATTHRRPAADSDSARMMELVERAQAGEADAFGRLYDQYSDTVYRYIYYRVGGKATAEDLTSETFLRALRRIGTFTYQGRDFGAWLVTIARNLVADHFKSSRFRLEVTTGEMLDANEVERSPEDSVLESLSNAALLDAVRRLNPQQQECVTLRFLQGLSVAETARVMGKNEGAIKTLQYRAVRTLARLLPDDAR.

Residues 1–87 (MYPHVGVDAS…PAADSDSARM (87 aa)) form a not required for transcription in vitro region. A disordered region spans residues 64–83 (RSSSSGAAATTHRRPAADSD). Residues 105-172 (LYDQYSDTVY…LVADHFKSSR (68 aa)) form a sigma-70 factor domain-2 region. The short motif at 129-132 (DLTS) is the Polymerase core binding element. A sigma-70 factor domain-4 region spans residues 204 to 255 (ALLDAVRRLNPQQQECVTLRFLQGLSVAETARVMGKNEGAIKTLQYRAVRTL).

It belongs to the sigma-70 factor family. ECF subfamily. Two forms of protein exist; a 35 kDa form in early growth and a 28 kDa form seen in later stages (at protein level). In liquid culture the larger form accumulates to higher level than on solid media. The shorter form results from processing just upstream of Met-87; the exact position is unknown. There are 4 possible start codons; mutation of the first prevents protein production while mutation of the other 3 (Val-44, Met-87 and Met-88) permits production of both forms. Introduction of stop codons between the first and second, or second and third possible start codons also prevents protein production, corroborating that the annotated start codon is the correct one.

Functionally, sigma factors are initiation factors that promote the attachment of RNA polymerase to specific initiation sites and are then released. Extracytoplasmic function (ECF) sigma factors are usually held in an inactive form by an anti-sigma factor until released. ECF sigma factor involved in aerial mycelium formation, required for translation from the bldMp1 promoter. Expressed as a preprotein; processing and accumulation of the mature protein starts as aerial mycelium formation and sporulation commence. Activates expression of about 17 genes, including those for rdlA and most of the chaplins (chpA to chpH); chaplin activation is indirect. The protein is ECF RNA polymerase sigma factor BldN of Streptomyces coelicolor (strain ATCC BAA-471 / A3(2) / M145).